The following is a 1170-amino-acid chain: Anion exchange protein 3 (1170 aa).

The Cytoplasmic portion of the chain corresponds to 1–656 (MGRSYNEKDF…DLKDALDTQC (656 aa)). 3 disordered regions span residues 17–96 (FHHT…PQLS), 112–167 (FHME…TTRG), and 239–267 (HLVK…RRKR). Residues 32–53 (RFRKRVLSMDRRRKRKRKKKKT) are compositionally biased toward basic residues. The segment covering 67-76 (VDEEEAESEI) has biased composition (acidic residues). Residues 246-259 (RCQLPRSSNGSPPL) are compositionally biased toward polar residues. 5 helical membrane passes run 657–677 (IAAV…FGGL), 702–722 (FSLL…LLVF), 744–764 (IGFW…SFLV), 774–794 (IFAF…LIKV), and 828–848 (PNTA…AFFL). Positions 657-1170 (IAAVIFIYFA…DEYNEIHMLV (514 aa)) are membrane (anion exchange). Over 849-863 (RKLRNSRFLGGKVRR) the chain is Cytoplasmic. 5 helical membrane passes run 864–884 (VIGD…DILI), 919–939 (FPVW…ILIF), 966–986 (LLLI…WLTA), 1020–1063 (RVTG…LTGI), and 1104–1124 (IVLL…FILI).

This sequence belongs to the anion exchanger (TC 2.A.31) family. In terms of tissue distribution, widely expressed at low levels.

It is found in the cell membrane. It carries out the reaction hydrogencarbonate(in) + chloride(out) = hydrogencarbonate(out) + chloride(in). Sodium-independent anion exchanger which mediates the electroneutral exchange of chloride for bicarbonate ions across the cell membrane. May be involved in the regulation of intracellular pH, and the modulation of cardiac action potential. This is Anion exchange protein 3 from Danio rerio (Zebrafish).